Reading from the N-terminus, the 379-residue chain is Probable protein phosphatase 2C 46 (379 aa).

A signal peptide spans 1–20; sequence MLSTLMKLLSACLWPSSSSG. A PPM-type phosphatase domain is found at 42–353; that stretch reads LVGEFSMAVV…DDITVVIIFL (312 aa). Residue Ser73 is modified to Phosphoserine. Asp84, Gly85, Asp285, and Asp344 together coordinate Mn(2+).

Belongs to the PP2C family. As to quaternary structure, interacts with SAUR19. Mg(2+) is required as a cofactor. It depends on Mn(2+) as a cofactor.

The catalysed reaction is O-phospho-L-seryl-[protein] + H2O = L-seryl-[protein] + phosphate. It carries out the reaction O-phospho-L-threonyl-[protein] + H2O = L-threonyl-[protein] + phosphate. Functionally, may dephosphorylate and repress plasma membrane H(+)-ATPases (PM H(+)-ATPases, e.g. AHA1 and AHA2), thus influencing negatively plant growth and fitness. The polypeptide is Probable protein phosphatase 2C 46 (Arabidopsis thaliana (Mouse-ear cress)).